Reading from the N-terminus, the 332-residue chain is MATSTTMSHQAIGSVVSQRPFKASQFLKEPLNNVPMKFRQKRFKIEATASQISVVDNTFLSPSPSKNKPHESKKKSNEAALILIRHGESLWNEKNLFTGCVDVPLTQKGVGEAIEAGKKISNIPVDLIFTSSLIRAQMTAMLAMTQHRRKKVPIILHNESVKAKTWSHVFSEETRKQSIPVIAAWQLNERMYGELQGLNKKETAERYGTQQVHEWRRSYEIPPPKGESLEMCAERAVAYFEDNIKPELASGNNVMIAAHGNSLRSIIMYLDDLTSQEVTTLDLSTGVPLLYIFKEGKFMKRGSPVGSTEAGVYAYTKRLAQYREKLDAAATI.

Residues 1–48 constitute a chloroplast transit peptide; sequence MATSTTMSHQAIGSVVSQRPFKASQFLKEPLNNVPMKFRQKRFKIEAT. Substrate contacts are provided by residues 85-92, 98-99, Arg135, 189-192, Lys200, 216-217, and 260-261; these read RHGESLWN, TG, ERMY, RR, and GN. The active-site Tele-phosphohistidine intermediate is His86. Glu189 functions as the Proton donor/acceptor in the catalytic mechanism.

Belongs to the phosphoglycerate mutase family. BPG-dependent PGAM subfamily.

It is found in the plastid. The protein resides in the chloroplast. It catalyses the reaction (2R)-2-phosphoglycerate = (2R)-3-phosphoglycerate. Its pathway is carbohydrate degradation; glycolysis; pyruvate from D-glyceraldehyde 3-phosphate: step 3/5. In terms of biological role, catalyzes the interconversion of 2-phosphoglycerate and 3-phosphoglycerate. The chain is 2,3-bisphosphoglycerate-dependent phosphoglycerate mutase 2 from Arabidopsis thaliana (Mouse-ear cress).